The following is a 301-amino-acid chain: Homoserine kinase (301 aa).

Position 86–96 (86–96 (PLARGLGSSAT)) interacts with ATP.

It belongs to the GHMP kinase family. Homoserine kinase subfamily.

It is found in the cytoplasm. It carries out the reaction L-homoserine + ATP = O-phospho-L-homoserine + ADP + H(+). It functions in the pathway amino-acid biosynthesis; L-threonine biosynthesis; L-threonine from L-aspartate: step 4/5. Its function is as follows. Catalyzes the ATP-dependent phosphorylation of L-homoserine to L-homoserine phosphate. The chain is Homoserine kinase from Thermosynechococcus vestitus (strain NIES-2133 / IAM M-273 / BP-1).